We begin with the raw amino-acid sequence, 486 residues long: ATP synthase subunit beta (486 aa).

Gly171–Thr178 contributes to the ATP binding site.

It belongs to the ATPase alpha/beta chains family. F-type ATPases have 2 components, CF(1) - the catalytic core - and CF(0) - the membrane proton channel. CF(1) has five subunits: alpha(3), beta(3), gamma(1), delta(1), epsilon(1). CF(0) has three main subunits: a(1), b(2) and c(9-12). The alpha and beta chains form an alternating ring which encloses part of the gamma chain. CF(1) is attached to CF(0) by a central stalk formed by the gamma and epsilon chains, while a peripheral stalk is formed by the delta and b chains.

It is found in the cell membrane. It carries out the reaction ATP + H2O + 4 H(+)(in) = ADP + phosphate + 5 H(+)(out). Its function is as follows. Produces ATP from ADP in the presence of a proton gradient across the membrane. The catalytic sites are hosted primarily by the beta subunits. The protein is ATP synthase subunit beta of Salinispora tropica (strain ATCC BAA-916 / DSM 44818 / JCM 13857 / NBRC 105044 / CNB-440).